The following is a 1577-amino-acid chain: High molecular weight form of myosin-1 (1577 aa).

A Myosin motor domain is found at 75-751; sequence KSVDDLVQMD…EQRGLELQRN (677 aa). Lys119 bears the N6,N6,N6-trimethyllysine mark. Residue 168–175 participates in ATP binding; that stretch reads GESGAGKT. 2 actin-binding regions span residues 628–650 and 730–744; these read LDSLMTALNATEPHYIRCIKPNS and QVGKTRVLYRAPEQR. An IQ domain is found at 755–782; that stretch reads ERVTIQIQAGVRRMFARRLYKRMRAIKP. The region spanning 1261–1401 is the MyTH4 domain; that stretch reads WTKSPIPTSL…PNVEQILAAK (141 aa). Disordered regions lie at residues 1442-1466 and 1483-1516; these read SRPAQARAQPGQQAQPAGAARQQAA and QQQQQQQGYDQQQQAYGGGADYGQQQQQQDLPAE. Composition is skewed to low complexity over residues 1444–1466 and 1483–1497; these read PAQARAQPGQQAQPAGAARQQAA and QQQQQQQGYDQQQQA. One can recognise an SH3 domain in the interval 1519-1577; that stretch reads EEYKQVEVVYDYDGGGDAQRLVLVKGAIITVIKEYEGWAYGSTDDGQVGLYPINYTRPI.

Belongs to the TRAFAC class myosin-kinesin ATPase superfamily. Myosin family. In terms of assembly, myosin I heavy chain is single-headed.

In Acanthamoeba castellanii (Amoeba), this protein is High molecular weight form of myosin-1.